A 285-amino-acid chain; its full sequence is 4-hydroxybenzoate octaprenyltransferase (285 aa).

7 consecutive transmembrane segments (helical) span residues 33–53 (FLAA…LGVV), 93–113 (LILF…MNTL), 134–154 (ITYL…PMAY), 166–186 (WLLF…YAMV), 209–229 (LMIG…GIQL), 233–253 (SLYN…QWLI), and 265–285 (FLNN…SVLI).

The protein belongs to the UbiA prenyltransferase family. Mg(2+) serves as cofactor.

The protein localises to the cell inner membrane. It catalyses the reaction all-trans-octaprenyl diphosphate + 4-hydroxybenzoate = 4-hydroxy-3-(all-trans-octaprenyl)benzoate + diphosphate. It functions in the pathway cofactor biosynthesis; ubiquinone biosynthesis. Its function is as follows. Catalyzes the prenylation of para-hydroxybenzoate (PHB) with an all-trans polyprenyl group. Mediates the second step in the final reaction sequence of ubiquinone-8 (UQ-8) biosynthesis, which is the condensation of the polyisoprenoid side chain with PHB, generating the first membrane-bound Q intermediate 3-octaprenyl-4-hydroxybenzoate. The sequence is that of 4-hydroxybenzoate octaprenyltransferase from Aliivibrio salmonicida (strain LFI1238) (Vibrio salmonicida (strain LFI1238)).